Consider the following 385-residue polypeptide: Aldehyde dehydrogenase family 3 member B2 (385 aa).

107-112 (GSPRVG) provides a ligand contact to NAD(+). Residues E129 and C163 contribute to the active site. At C382 the chain carries Cysteine methyl ester. C382 carries S-geranylgeranyl cysteine lipidation. Positions 383 to 385 (TLL) are cleaved as a propeptide — removed in mature form.

Belongs to the aldehyde dehydrogenase family. Post-translationally, geranylgeranylation is important for localization to lipid droplets and enzyme activity. As to expression, salivary gland. Expressed at protein level in placenta.

Its subcellular location is the lipid droplet. It catalyses the reaction an aldehyde + NAD(+) + H2O = a carboxylate + NADH + 2 H(+). The catalysed reaction is a long-chain fatty aldehyde + NAD(+) + H2O = a long-chain fatty acid + NADH + 2 H(+). The enzyme catalyses a medium-chain fatty aldehyde + NAD(+) + H2O = a medium-chain fatty acid + NADH + 2 H(+). It carries out the reaction hexadecanoate + NADH + 2 H(+) = hexadecanal + NAD(+) + H2O. It catalyses the reaction octanal + NAD(+) + H2O = octanoate + NADH + 2 H(+). It functions in the pathway alcohol metabolism; ethanol degradation; acetate from ethanol: step 2/2. In terms of biological role, oxidizes medium and long chain fatty aldehydes in lipid droplets into non-toxic fatty acids. The protein is Aldehyde dehydrogenase family 3 member B2 (ALDH3B2) of Homo sapiens (Human).